A 180-amino-acid polypeptide reads, in one-letter code: MTQRLKKLYTEKIVPKFYKDFQYKNIHEVPSLKKIVINRGIGDASQNAKILETFLKELSIIAGQKGVITRSKKSIAGFKIRDKMPVGVSVTLRGDRMYGFLDRLIHLALPRVRDFQGINPKSFDKNGNYSLGLEEQLMFPEIEYDKIDQIRGMDISIVTTAKNQEEGLALLKEFGLPFQS.

This sequence belongs to the universal ribosomal protein uL5 family. In terms of assembly, part of the 50S ribosomal subunit; contacts the 5S rRNA.

It is found in the plastid. Its subcellular location is the chloroplast. Its function is as follows. Binds 5S rRNA, forms part of the central protuberance of the 50S subunit. This is Large ribosomal subunit protein uL5c (rpl5) from Tetradesmus obliquus (Green alga).